Consider the following 350-residue polypeptide: Twinfilin-1 (350 aa).

Ser2 is modified (N-acetylserine). Positions 2–139 (SHRTGIQASE…SLHGYKKYLL (138 aa)) constitute an ADF-H 1 domain. Residues Ser143 and Ser277 each carry the phosphoserine modification. The ADF-H 2 domain occupies 175–313 (LQGVAFPISR…TADFLYEEVH (139 aa)). Tyr309 is modified (phosphotyrosine). The disordered stretch occupies residues 316-350 (QHAHKQSFAKPKGPAGKRGIRRLIRGPAETEATTD). Thr349 is modified (phosphothreonine).

This sequence belongs to the actin-binding proteins ADF family. Twinfilin subfamily. In terms of assembly, interacts with G-actin; ADP-actin form and capping protein (CP). May also be able to interact with TWF2 and phosphoinositides, PI(4,5)P2. When bound to PI(4,5)P2, it is down-regulated. Interacts with ACTG1. Post-translationally, phosphorylated on serine and threonine residues.

It is found in the cytoplasm. Its subcellular location is the cytoskeleton. Functionally, actin-binding protein involved in motile and morphological processes. Inhibits actin polymerization, likely by sequestering G-actin. By capping the barbed ends of filaments, it also regulates motility. Seems to play an important role in clathrin-mediated endocytosis and distribution of endocytic organelles. The polypeptide is Twinfilin-1 (TWF1) (Pongo abelii (Sumatran orangutan)).